The sequence spans 309 residues: Thioredoxin reductase (309 aa).

FAD is bound at residue 35–42; the sequence is EKQFPGGK. A disulfide bridge connects residues C134 and C137. 277 to 286 serves as a coordination point for FAD; sequence DIVDKNVRQI.

The protein belongs to the class-II pyridine nucleotide-disulfide oxidoreductase family. In terms of assembly, homodimer. FAD serves as cofactor.

It is found in the cytoplasm. It carries out the reaction [thioredoxin]-dithiol + NADP(+) = [thioredoxin]-disulfide + NADPH + H(+). The chain is Thioredoxin reductase (trxB) from Ureaplasma parvum serovar 3 (strain ATCC 700970).